Reading from the N-terminus, the 285-residue chain is Chalcone synthase 6-4 (285 aa).

Residue C60 is part of the active site.

Belongs to the thiolase-like superfamily. Chalcone/stilbene synthases family.

It carries out the reaction (E)-4-coumaroyl-CoA + 3 malonyl-CoA + 3 H(+) = 2',4,4',6'-tetrahydroxychalcone + 3 CO2 + 4 CoA. It functions in the pathway secondary metabolite biosynthesis; flavonoid biosynthesis. The primary product of this enzyme is 4,2',4',6'-tetrahydroxychalcone (also termed naringenin-chalcone or chalcone) which can under specific conditions spontaneously isomerize into naringenin. This is Chalcone synthase 6-4 (CHS6-4) from Medicago sativa (Alfalfa).